Consider the following 349-residue polypeptide: C-X-C chemokine receptor type 4 (349 aa).

Positions 1–18 (MEIYTSDNYSEEVGSGDY) are important for chemokine binding and signaling. The segment at 1 to 23 (MEIYTSDNYSEEVGSGDYDSNKE) is disordered. Topologically, residues 1 to 35 (MEIYTSDNYSEEVGSGDYDSNKEPCFRDENENFNR) are extracellular. N-linked (GlcNAc...) asparagine glycosylation occurs at Asn8. At Tyr9 the chain carries Sulfotyrosine. O-linked (Xyl...) (chondroitin sulfate) serine glycosylation occurs at Ser15. Tyr18 carries the sulfotyrosine modification. Intrachain disulfides connect Cys25/Cys271 and Cys106/Cys183. The chain crosses the membrane as a helical span at residues 36 to 60 (IFLPTIYFIIFLTGIVGNGLVILVM). Residues 61–74 (GYQKKLRSMTDKYR) are Cytoplasmic-facing. The helical transmembrane segment at 75 to 96 (LHLSVADLLFVITLPFWAVDAM) threads the bilayer. The tract at residues 91–94 (WAVD) is chemokine binding. At 97–107 (ADWYFGKFLCK) the chain is on the extracellular side. Residues 108-127 (AVHIIYTVNLYSSVLILAFI) traverse the membrane as a helical segment. The interval 110 to 114 (HIIYT) is chemokine binding. Residues 128-151 (SLDRYLAIVHATNSQRPRKLLAEK) are Cytoplasmic-facing. The Important for signaling motif lies at 130 to 132 (DRY). The tract at residues 132–144 (YLAIVHATNSQRP) is involved in dimerization; when bound to chemokine. Residues 152 to 171 (AVYVGVWIPALLLTIPDIIF) traverse the membrane as a helical segment. Over 172–192 (ADVSQGDGRYICDRLYPDSLW) the chain is Extracellular. Positions 183–187 (CDRLY) are chemokine binding, important for signaling. Positions 188–207 (PDSLWMVVFQFQHIMVGLIL) are involved in dimerization. The helical transmembrane segment at 193 to 213 (MVVFQFQHIMVGLILPGIVIL) threads the bilayer. The Cytoplasmic segment spans residues 214 to 238 (SCYCIIISKLSHSKGHQKRKALKTT). Residues 239-258 (VILILAFFACWLPYYVGISI) traverse the membrane as a helical segment. At 259–279 (DSFILLEVIKQGCEFESVVHK) the chain is on the extracellular side. The segment at 263-265 (LLE) is involved in dimerization. The chain crosses the membrane as a helical span at residues 280–299 (WISITEALAFFHCCLNPILY). Residues 300–349 (AFLGAKFKSSAQHALNSMSRGSSLKILSKGKRGGHSSVSTESESSSFHSS) are Cytoplasmic-facing. Phosphoserine occurs at positions 316 and 318. 2 positions are modified to phosphoserine; by PKC and GRK6: Ser321 and Ser322. Residues 325-349 (ILSKGKRGGHSSVSTESESSSFHSS) are disordered. Ser327 carries the post-translational modification Phosphoserine; by GRK6. Lys328 participates in a covalent cross-link: Glycyl lysine isopeptide (Lys-Gly) (interchain with G-Cter in ubiquitin). Over residues 334 to 349 (HSSVSTESESSSFHSS) the composition is skewed to low complexity. A Phosphoserine; by GRK6 modification is found at Ser336. A phosphoserine mark is found at Ser345 and Ser348.

Belongs to the G-protein coupled receptor 1 family. As to quaternary structure, monomer. Can form homodimers. Interacts with CD164. Interacts with ARRB2; the interaction is dependent on the C-terminal phosphorylation of CXCR4 and allows activation of MAPK1 and MAPK3. Interacts with ARR3; the interaction is dependent on the C-terminal phosphorylation of CXCR4 and modulates calcium mobilization. Interacts with RNF113A; the interaction, enhanced by CXCL12, promotes CXCR4 ubiquitination and subsequent degradation. Interacts (via the cytoplasmic C-terminal) with ITCH (via the WW domains I and II); the interaction, enhanced by CXCL12, promotes CXCR4 ubiquitination and leads to its degradation. Interacts with extracellular ubiquitin. Interacts with DBN1; this interaction is enhanced by antigenic stimulation. Following LPS binding, may form a complex with GDF5, HSP90AA1 and HSPA8. Phosphorylated on agonist stimulation. Rapidly phosphorylated on serine and threonine residues in the C-terminal. Phosphorylation at Ser-321 and Ser-322 leads to recruitment of ITCH, ubiquitination and protein degradation. In terms of processing, ubiquitinated after ligand binding, leading to its degradation. Ubiquitinated by ITCH at the cell membrane on agonist stimulation. The ubiquitin-dependent mechanism, endosomal sorting complex required for transport (ESCRT), then targets CXCR4 for lysosomal degradation. This process is dependent also on prior Ser-/Thr-phosphorylation in the C-terminal of CXCR4. Also binding of ARRB1 to STAM negatively regulates CXCR4 sorting to lysosomes though modulating ubiquitination of SFR5S. Post-translationally, sulfation is required for efficient binding of CXCL12/SDF-1alpha and promotes its dimerization. O- and N-glycosylated. N-glycosylation can mask coreceptor function. The O-glycosylation chondroitin sulfate attachment does not affect interaction with CXCL12/SDF-1alpha nor its coreceptor activity.

It is found in the cell membrane. The protein resides in the cell junction. It localises to the early endosome. The protein localises to the late endosome. Its subcellular location is the lysosome. Receptor for the C-X-C chemokine CXCL12/SDF-1 that transduces a signal by increasing intracellular calcium ion levels and enhancing MAPK1/MAPK3 activation. Involved in the AKT signaling cascade. Plays a role in regulation of cell migration, e.g. during wound healing. Acts as a receptor for extracellular ubiquitin; leading to enhanced intracellular calcium ions and reduced cellular cAMP levels. Binds bacterial lipopolysaccharide (LPS) et mediates LPS-induced inflammatory response, including TNF secretion by monocytes. Involved in hematopoiesis and in cardiac ventricular septum formation. Also plays an essential role in vascularization of the gastrointestinal tract, probably by regulating vascular branching and/or remodeling processes in endothelial cells. Involved in cerebellar development. In the CNS, could mediate hippocampal-neuron survival. In Rattus norvegicus (Rat), this protein is C-X-C chemokine receptor type 4 (Cxcr4).